Consider the following 373-residue polypeptide: MSEVKSRKKPGPKVAAPEPEKRSDGRKNPEARGGAGWADPRTGLSLLSLATSLGLAWLVFQQSEKFAKVENQYRLLQTESSEFQGLQSKISLISNKLESTENTLQEATSSMSLMTQFEQEVAGLQRSIHDIENSEEMLTQKLQNLNEKFQNITDLWKRTLVEMSDNTAVFKSEAKSTHSEVTLKINSAEQEIKLLTERLKDLEDSTLRNIRTVSRQEEEDLLRVEAQLSSDTKAVEKLEEEQRTLLARDEDLTDKLSSYEPKVEECKAHLPTIENAVHSVLRVSQDLIGTERKMEELTVQMFNMEDDMLKAVSEIMEMQNTLEGIQYDNSLLKMQNELVVLKGKVHDFMAYSSAGEKGTLEEYNLENKGTDDY.

Residues 1–11 are compositionally biased toward basic residues; sequence MSEVKSRKKPG. A disordered region spans residues 1 to 38; that stretch reads MSEVKSRKKPGPKVAAPEPEKRSDGRKNPEARGGAGWA. Residues 18-30 are compositionally biased toward basic and acidic residues; sequence EPEKRSDGRKNPE. Residues 43-59 traverse the membrane as a helical segment; sequence GLSLLSLATSLGLAWLV. Coiled coils occupy residues 64–257 and 290–325; these read EKFA…DKLS and TERK…LEGI. The N-linked (GlcNAc...) asparagine glycan is linked to asparagine 151.

In terms of processing, N-glycosylated at Asn-151.

The protein localises to the endoplasmic reticulum membrane. In terms of biological role, target of p53/TP53 with pro-apoptotic function. This is Inhibitor of nuclear factor kappa-B kinase-interacting protein (Ikbip) from Rattus norvegicus (Rat).